A 204-amino-acid polypeptide reads, in one-letter code: Oocyte-specific homeobox protein 1 (204 aa).

The disordered stretch occupies residues 28–73 (EPARNLAFQMRQSPLVTPGSTTKSSLSVPERNLLKQESQGPSRQSG). 2 stretches are compositionally biased toward polar residues: residues 37–54 (MRQSPLVTPGSTTKSSLS) and 62–72 (KQESQGPSRQS). A DNA-binding region (homeobox) is located at residues 94–153 (FRKERTVYTKEQQGLLQKHFDECQYPNKKKIVELALSVGVTKREIKIWFKNNRAKYRRMN).

This sequence belongs to the paired homeobox family. Obox subfamily. As to expression, specifically expressed in oocytes and early embryos.

It localises to the nucleus. In terms of biological role, transcription factor required for zygotic genome activation (ZGA), a critical event in early embryonic development during which the developmental control passes from maternally provided mRNAs to the expression of the zygotic genome after fertilization. Together with other Obox family members, required in early two-cell stage embryos to kick-start the major ZGA wave by facilitating RNA Polymerase II 'pre-configuration', during which RNA Polymerase II relocates from the initial one-cell stage binding targets to ZGA gene promoters and distal enhancers. Mechanistically, promotes recruitment of RNA Polymerase II from (CG-rich) non-ZGA genes to (CG-poor) ZGA genes at the two-cell stage. Binds to regulatory DNA sequences containing a 5'-ACNCCTTTAATCCCAG-3' sequence motif. Most maternal and zygotic Obox family proteins can compensate for one another. In addition to its role in ZGA, promotes embryonic stem cell pluripotency. The protein is Oocyte-specific homeobox protein 1 of Mus musculus (Mouse).